Here is a 749-residue protein sequence, read N- to C-terminus: Cytosolic phospholipase A2 (749 aa).

A phospholipid binding region spans residues 1-178 (MSFIDPYQHI…MKKLLGPKNS (178 aa)). Phosphoserine is present on serine 2. One can recognise a C2 domain in the interval 6–122 (PYQHIIVEHH…KVGEKKQVPF (117 aa)). Ca(2+) is bound by residues aspartate 40, threonine 41, aspartate 43, asparagine 65, aspartate 93, alanine 94, and asparagine 95. Residues 140 to 740 (SSPDLRFSMA…SSVEARRFFN (601 aa)) form the PLA2c domain. Serine 228 (nucleophile) is an active-site residue. Phosphothreonine is present on threonine 268. Positions 426–458 (AKHIVSNDSSDSDDESQGPKGTEHEEAEREYQN) are disordered. 3 positions are modified to phosphoserine: serine 434, serine 435, and serine 437. A compositionally biased stretch (basic and acidic residues) spans 446–457 (GTEHEEAEREYQ). Serine 505 is subject to Phosphoserine; by MAPK. A Phosphoserine modification is found at serine 515. Residue lysine 541 forms a Glycyl lysine isopeptide (Lys-Gly) (interchain with G-Cter in SUMO2) linkage. Aspartate 549 functions as the Proton acceptor in the catalytic mechanism. Lysine 606 participates in a covalent cross-link: Glycyl lysine isopeptide (Lys-Gly) (interchain with G-Cter in SUMO2). Phosphoserine is present on residues serine 727 and serine 729.

Interacts with KAT5. In terms of processing, phosphorylated at both Ser-505 and Ser-727 in response to mitogenic stimuli. In terms of tissue distribution, detected in granulosa cells after stimulation with chorionic gonadotropin (at protein level).

Its subcellular location is the cytoplasm. It is found in the golgi apparatus membrane. The protein resides in the nucleus envelope. The enzyme catalyses a 1,2-diacyl-sn-glycero-3-phosphocholine + H2O = a 1-acyl-sn-glycero-3-phosphocholine + a fatty acid + H(+). It carries out the reaction a 1-O-alkyl-2-acyl-sn-glycero-3-phosphocholine + H2O = a 1-O-alkyl-sn-glycero-3-phosphocholine + a fatty acid + H(+). The catalysed reaction is a 1-acyl-sn-glycero-3-phosphocholine + H2O = sn-glycerol 3-phosphocholine + a fatty acid + H(+). It catalyses the reaction 1-hexadecanoyl-2-(5Z,8Z,11Z,14Z-eicosatetraenoyl)-sn-glycero-3-phosphocholine + H2O = 1-hexadecanoyl-sn-glycero-3-phosphocholine + (5Z,8Z,11Z,14Z)-eicosatetraenoate + H(+). The enzyme catalyses 1,2-di-(5Z,8Z,11Z,14Z-eicosatetraenoyl)-sn-glycero-3-phosphocholine + H2O = 1-(5Z,8Z,11Z,14Z-eicosatetraenoyl)-sn-glycero-3-phosphocholine + (5Z,8Z,11Z,14Z)-eicosatetraenoate + H(+). It carries out the reaction 1-octadecanoyl-2-(5Z,8Z,11Z,14Z-eicosatetraenoyl)-sn-glycero-3-phosphocholine + H2O = 1-octadecanoyl-sn-glycero-3-phosphocholine + (5Z,8Z,11Z,14Z)-eicosatetraenoate + H(+). The catalysed reaction is 1-hexadecanoyl-2-(9Z,12Z-octadecadienoyl)-sn-glycero-3-phosphocholine + H2O = (9Z,12Z)-octadecadienoate + 1-hexadecanoyl-sn-glycero-3-phosphocholine + H(+). It catalyses the reaction 1-octadecanoyl-2-(9Z,12Z,15Z-octadecatrienoyl)-sn-glycero-3-phosphocholine + H2O = (9Z,12Z,15Z)-octadecatrienoate + 1-octadecanoyl-sn-glycero-3-phosphocholine + H(+). The enzyme catalyses 1-(5Z,8Z,11Z,14Z-eicosatetraenoyl)-2-hexadecanoyl-sn-glycero-3-phosphocholine + H2O = 1-(5Z,8Z,11Z,14Z-eicosatetraenoyl)-sn-glycero-3-phosphocholine + hexadecanoate + H(+). It carries out the reaction 1-O-hexadecyl-2-(5Z,8Z,11Z,14Z)-eicosatetraenoyl-sn-glycero-3-phosphocholine + H2O = 1-O-hexadecyl-sn-glycero-3-phosphocholine + (5Z,8Z,11Z,14Z)-eicosatetraenoate + H(+). The catalysed reaction is 1,2-di-(9Z-octadecenoyl)-sn-glycero-3-phospho-(1'-sn-glycerol) + H2O = 1-(9Z-octadecenoyl)-sn-glycero-3-phospho-(1'-sn-glycerol) + (9Z)-octadecenoate + H(+). It catalyses the reaction 1-octadecanoyl-2-(5Z,8Z,11Z,14Z-eicosatetraenoyl)-sn-glycero-3-phosphate + H2O = 1-octadecanoyl-sn-glycero-3-phosphate + (5Z,8Z,11Z,14Z)-eicosatetraenoate + H(+). The enzyme catalyses 1-hexadecanoyl-sn-glycero-3-phosphocholine + H2O = sn-glycerol 3-phosphocholine + hexadecanoate + H(+). It carries out the reaction 2-(prostaglandin E2)-sn-glycero-3-phosphoethanolamine + H2O = sn-glycero-3-phosphoethanolamine + prostaglandin E2 + H(+). The catalysed reaction is 2-[(15S)-hydroxy-(5Z,8Z,11Z,13E)-eicosatetraenoyl]-sn-glycero-3-phosphocholine + H2O = (15S)-hydroxy-(5Z,8Z,11Z,13E)-eicosatetraenoate + sn-glycerol 3-phosphocholine + H(+). It catalyses the reaction 2-[(15R)-hydroxy-(5Z,8Z,11Z,13E)-eicosatetraenoyl]-sn-glycero-3-phosphocholine + H2O = (15R)-hydroxy-(5Z,8Z,11Z,13E)-eicosatetraenoate + sn-glycerol 3-phosphocholine + H(+). The enzyme catalyses 2-(prostaglandin E2)-sn-glycero-3-phosphocholine + H2O = prostaglandin E2 + sn-glycerol 3-phosphocholine + H(+). It carries out the reaction 2-[(11R)-hydroxy-(5Z,8Z,12E,14Z)-eicosatetraenoyl]-sn-glycero-3-phosphocholine + H2O = (11R)-hydroxy-(5Z,8Z,12E,14Z)-eicosatetraenoate + sn-glycerol 3-phosphocholine + H(+). The catalysed reaction is 1-(5Z,8Z,11Z,14Z-eicosatetraenoyl)-2-O-hexadecyl-sn-glycero-3-phosphocholine + H2O = 2-O-hexadecyl-sn-glycero-3-phosphocholine + (5Z,8Z,11Z,14Z)-eicosatetraenoate + H(+). It catalyses the reaction 1-octadecanoyl-2-(5Z,8Z,11Z,14Z-eicosatetraenoyl)-sn-glycero-3-phosphocholine + glycerol = 1-(5Z,8Z,11Z,14Z-eicosatetraenoyl)-glycerol + 1-octadecanoyl-sn-glycero-3-phosphocholine. The enzyme catalyses 1-octadecanoyl-2-(9Z,12Z,15Z-octadecatrienoyl)-sn-glycero-3-phosphocholine + glycerol = 1-(9Z,12Z,15Z-octadecatrienoyl)-glycerol + 1-octadecanoyl-sn-glycero-3-phosphocholine. The protein operates within membrane lipid metabolism; glycerophospholipid metabolism. It functions in the pathway lipid metabolism; arachidonate metabolism. It participates in lipid metabolism; prostaglandin biosynthesis. Its pathway is lipid metabolism; leukotriene B4 biosynthesis. Its activity is regulated as follows. Activated by cytosolic calcium, which is necessary for binding to membrane lipids. Activated by phosphorylation in response to mitogenic stimuli. Has primarily calcium-dependent phospholipase and lysophospholipase activities, with a major role in membrane lipid remodeling and biosynthesis of lipid mediators of the inflammatory response. Plays an important role in embryo implantation and parturition through its ability to trigger prostanoid production. Preferentially hydrolyzes the ester bond of the fatty acyl group attached at sn-2 position of phospholipids (phospholipase A2 activity). Selectively hydrolyzes sn-2 arachidonoyl group from membrane phospholipids, providing the precursor for eicosanoid biosynthesis via the cyclooxygenase pathway. In an alternative pathway of eicosanoid biosynthesis, hydrolyzes sn-2 fatty acyl chain of eicosanoid lysophopholipids to release free bioactive eicosanoids. Hydrolyzes the ester bond of the fatty acyl group attached at sn-1 position of phospholipids (phospholipase A1 activity) only if an ether linkage rather than an ester linkage is present at the sn-2 position. This hydrolysis is not stereospecific. Has calcium-independent phospholipase A2 and lysophospholipase activities in the presence of phosphoinositides. Has O-acyltransferase activity. Catalyzes the transfer of fatty acyl chains from phospholipids to a primary hydroxyl group of glycerol (sn-1 or sn-3), potentially contributing to monoacylglycerol synthesis. The chain is Cytosolic phospholipase A2 (PLA2G4A) from Bos taurus (Bovine).